The sequence spans 358 residues: Membrane-bound lytic murein transglycosylase C (358 aa).

An N-terminal signal peptide occupies residues Met1 to Ser16. The N-palmitoyl cysteine moiety is linked to residue Cys17. Cys17 is lipidated: S-diacylglycerol cysteine.

It belongs to the transglycosylase Slt family.

Its subcellular location is the cell outer membrane. It catalyses the reaction Exolytic cleavage of the (1-&gt;4)-beta-glycosidic linkage between N-acetylmuramic acid (MurNAc) and N-acetylglucosamine (GlcNAc) residues in peptidoglycan, from either the reducing or the non-reducing ends of the peptidoglycan chains, with concomitant formation of a 1,6-anhydrobond in the MurNAc residue.. Its function is as follows. Murein-degrading enzyme. May play a role in recycling of muropeptides during cell elongation and/or cell division. This Yersinia enterocolitica serotype O:8 / biotype 1B (strain NCTC 13174 / 8081) protein is Membrane-bound lytic murein transglycosylase C.